Here is a 547-residue protein sequence, read N- to C-terminus: Inactive delta-guaiene synthase (547 aa).

Mg(2+) contacts are provided by Asp299, Asp303, and Asp444. Positions 299-303 (DDTYD) match the DDXXD motif motif.

Belongs to the terpene synthase family. It depends on Mg(2+) as a cofactor.

This Aquilaria crassna (Eagle wood) protein is Inactive delta-guaiene synthase (C1).